The sequence spans 177 residues: uncharacterized protein (177 aa).

The protein belongs to the flavoredoxin family. It depends on FMN as a cofactor.

This is an uncharacterized protein from Archaeoglobus fulgidus (strain ATCC 49558 / DSM 4304 / JCM 9628 / NBRC 100126 / VC-16).